We begin with the raw amino-acid sequence, 98 residues long: NADH-ubiquinone oxidoreductase chain 4L (98 aa).

3 helical membrane-spanning segments follow: residues Met-1–Ile-21, Ser-28–Ile-48, and Ala-59–Val-79.

Belongs to the complex I subunit 4L family. As to quaternary structure, core subunit of respiratory chain NADH dehydrogenase (Complex I) which is composed of 45 different subunits.

It localises to the mitochondrion inner membrane. The catalysed reaction is a ubiquinone + NADH + 5 H(+)(in) = a ubiquinol + NAD(+) + 4 H(+)(out). Functionally, core subunit of the mitochondrial membrane respiratory chain NADH dehydrogenase (Complex I) which catalyzes electron transfer from NADH through the respiratory chain, using ubiquinone as an electron acceptor. Part of the enzyme membrane arm which is embedded in the lipid bilayer and involved in proton translocation. The chain is NADH-ubiquinone oxidoreductase chain 4L (MT-ND4L) from Isoodon macrourus (Short-nosed bandicoot).